The following is a 369-amino-acid chain: Queuine tRNA-ribosyltransferase (369 aa).

Asp-89 functions as the Proton acceptor in the catalytic mechanism. Substrate is bound by residues 89–93 (DSGGF), Asp-142, Gln-184, and Gly-211. Residues 242 to 248 (GGGSPEL) are RNA binding. Catalysis depends on Asp-261, which acts as the Nucleophile. The tract at residues 266 to 270 (TRIAR) is RNA binding; important for wobble base 34 recognition. Zn(2+) contacts are provided by Cys-299, Cys-301, Cys-304, and His-330.

The protein belongs to the queuine tRNA-ribosyltransferase family. Homodimer. Within each dimer, one monomer is responsible for RNA recognition and catalysis, while the other monomer binds to the replacement base PreQ1. Zn(2+) is required as a cofactor.

The catalysed reaction is 7-aminomethyl-7-carbaguanine + guanosine(34) in tRNA = 7-aminomethyl-7-carbaguanosine(34) in tRNA + guanine. The protein operates within tRNA modification; tRNA-queuosine biosynthesis. Functionally, catalyzes the base-exchange of a guanine (G) residue with the queuine precursor 7-aminomethyl-7-deazaguanine (PreQ1) at position 34 (anticodon wobble position) in tRNAs with GU(N) anticodons (tRNA-Asp, -Asn, -His and -Tyr). Catalysis occurs through a double-displacement mechanism. The nucleophile active site attacks the C1' of nucleotide 34 to detach the guanine base from the RNA, forming a covalent enzyme-RNA intermediate. The proton acceptor active site deprotonates the incoming PreQ1, allowing a nucleophilic attack on the C1' of the ribose to form the product. After dissociation, two additional enzymatic reactions on the tRNA convert PreQ1 to queuine (Q), resulting in the hypermodified nucleoside queuosine (7-(((4,5-cis-dihydroxy-2-cyclopenten-1-yl)amino)methyl)-7-deazaguanosine). The chain is Queuine tRNA-ribosyltransferase from Thermotoga sp. (strain RQ2).